Reading from the N-terminus, the 344-residue chain is uncharacterized protein (344 aa).

NADP(+)-binding residues include K38 and Y167.

Belongs to the NAD(P)-dependent epimerase/dehydratase family. Dihydroflavonol-4-reductase subfamily.

This is an uncharacterized protein from Saccharomyces cerevisiae (strain ATCC 204508 / S288c) (Baker's yeast).